Here is a 405-residue protein sequence, read N- to C-terminus: Terminal uridylyltransferase cid1 (405 aa).

UTP is bound at residue serine 90. Residues aspartate 101 and aspartate 103 each contribute to the Mg(2+) site. UTP contacts are provided by alanine 168, asparagine 171, threonine 172, lysine 193, lysine 197, serine 211, tyrosine 212, and histidine 336. The PAP-associated domain maps to 267–336 (SLGSLLHGFF…AIEDPFEISH (70 aa)). Arginine 340 is an ATP binding site. Residues 377 to 405 (APIPPRRQKKTDEQSNKKLLNETDGDNSE) are disordered. Residues 386–397 (KTDEQSNKKLLN) are compositionally biased toward basic and acidic residues.

It belongs to the DNA polymerase type-B-like family. Mg(2+) is required as a cofactor. It depends on Mn(2+) as a cofactor.

The protein resides in the cytoplasm. The enzyme catalyses RNA(n) + UTP = RNA(n)-3'-uridine ribonucleotide + diphosphate. The catalysed reaction is RNA(n) + ATP = RNA(n)-3'-adenine ribonucleotide + diphosphate. Cytoplasmic uridylyltransferase that mediates the terminal uridylation of mRNAs with short poly(A) tails such as such as act1, hcn1 and urg1 mRNAs, hence facilitating global mRNA decay. Uridylates the 3' ends of actin mRNAs upon S-phase arrest. Also has a weak poly(A) polymerase (PAP) activity. Residue His-336 is responsible for the specificity for UTP. Involved in cell cycle arrest where in association with crb2/rhp9 and chk1 it inhibits unscheduled mitosis. The polypeptide is Terminal uridylyltransferase cid1 (Schizosaccharomyces pombe (strain 972 / ATCC 24843) (Fission yeast)).